The sequence spans 83 residues: Small ribosomal subunit protein bS16 (83 aa).

This sequence belongs to the bacterial ribosomal protein bS16 family.

The sequence is that of Small ribosomal subunit protein bS16 from Syntrophus aciditrophicus (strain SB).